The following is a 466-amino-acid chain: Alpha-1,3-mannosyltransferase CMT1 (466 aa).

Residues 1–23 (MFRNTLRTFPRPATPSLPTSSHS) are disordered. Residues 1–33 (MFRNTLRTFPRPATPSLPTSSHSPIARASLSKS) lie on the Cytoplasmic side of the membrane. The chain crosses the membrane as a helical; Signal-anchor for type II membrane protein span at residues 34-54 (PLFVLSLVLVCIFFLSFLSHP). Residues 55–466 (DPSARKLQWP…ETRWVQPWLE (412 aa)) are Lumenal-facing.

Mg(2+) is required as a cofactor. The cofactor is Mn(2+). It depends on Co(2+) as a cofactor.

Its subcellular location is the golgi apparatus membrane. It participates in protein modification; protein glycosylation. Functionally, responsible for addition of mannose residues in an alpha-1,3 linkage to a polymannosly precursor. May be involved in synthesis of capsule glucuronoxylomannan. The polypeptide is Alpha-1,3-mannosyltransferase CMT1 (Cryptococcus neoformans var. neoformans serotype D (strain JEC21 / ATCC MYA-565) (Filobasidiella neoformans)).